The following is a 313-amino-acid chain: Glyoxylate/hydroxypyruvate reductase A (313 aa).

Residue R228 is part of the active site. The Proton donor role is filled by H276.

This sequence belongs to the D-isomer specific 2-hydroxyacid dehydrogenase family. GhrA subfamily.

It localises to the cytoplasm. The catalysed reaction is glycolate + NADP(+) = glyoxylate + NADPH + H(+). It carries out the reaction (R)-glycerate + NAD(+) = 3-hydroxypyruvate + NADH + H(+). It catalyses the reaction (R)-glycerate + NADP(+) = 3-hydroxypyruvate + NADPH + H(+). In terms of biological role, catalyzes the NADPH-dependent reduction of glyoxylate and hydroxypyruvate into glycolate and glycerate, respectively. The protein is Glyoxylate/hydroxypyruvate reductase A of Serratia proteamaculans (strain 568).